We begin with the raw amino-acid sequence, 693 residues long: Elongation factor G 1 (693 aa).

In terms of domain architecture, tr-type G spans 4–281 (NKLRNIGISA…AVTRFLPSPH (278 aa)). Residues 13-20 (AHIDSGKT), 80-84 (DTPGH), and 134-137 (NKCD) each bind GTP.

This sequence belongs to the TRAFAC class translation factor GTPase superfamily. Classic translation factor GTPase family. EF-G/EF-2 subfamily.

The protein resides in the cytoplasm. In terms of biological role, catalyzes the GTP-dependent ribosomal translocation step during translation elongation. During this step, the ribosome changes from the pre-translocational (PRE) to the post-translocational (POST) state as the newly formed A-site-bound peptidyl-tRNA and P-site-bound deacylated tRNA move to the P and E sites, respectively. Catalyzes the coordinated movement of the two tRNA molecules, the mRNA and conformational changes in the ribosome. The chain is Elongation factor G 1 from Borreliella afzelii (strain PKo) (Borrelia afzelii).